Reading from the N-terminus, the 156-residue chain is Small ribosomal subunit protein uS7 (156 aa).

The protein belongs to the universal ribosomal protein uS7 family. In terms of assembly, part of the 30S ribosomal subunit. Contacts proteins S9 and S11.

In terms of biological role, one of the primary rRNA binding proteins, it binds directly to 16S rRNA where it nucleates assembly of the head domain of the 30S subunit. Is located at the subunit interface close to the decoding center, probably blocks exit of the E-site tRNA. This chain is Small ribosomal subunit protein uS7, found in Thiobacillus denitrificans (strain ATCC 25259 / T1).